The chain runs to 350 residues: Mannonate dehydratase (350 aa).

This sequence belongs to the mannonate dehydratase family. It depends on Fe(2+) as a cofactor. Requires Mn(2+) as cofactor.

The catalysed reaction is D-mannonate = 2-dehydro-3-deoxy-D-gluconate + H2O. It participates in carbohydrate metabolism; pentose and glucuronate interconversion. Functionally, catalyzes the dehydration of D-mannonate. This is Mannonate dehydratase from Clostridium perfringens (strain 13 / Type A).